Here is a 559-residue protein sequence, read N- to C-terminus: Pentatricopeptide repeat-containing protein At2g42920, chloroplastic (559 aa).

The N-terminal 14 residues, 1–14 (MSPTILSFSGVTVP), are a transit peptide targeting the chloroplast. PPR repeat units lie at residues 88–122 (NPFVWNTIIRGFSRSSFPEMAISIFIDMLCSSPSV), 125–159 (QRLTYPSVFKAYGRLGQARDGRQLHGMVIKEGLED), 160–190 (DSFIRNTMLHMYVTCGCLIEAWRIFLGMIGF), 191–221 (DVVAWNSMIMGFAKCGLIDQAQNLFDEMPQR), 222–256 (NGVSWNSMISGFVRNGRFKDALDMFREMQEKDVKP), 257–291 (DGFTMVSLLNACAYLGASEQGRWIHEYIVRNRFEL), 292–322 (NSIVVTALIDMYCKCGCIEEGLNVFECAPKK), 323–357 (QLSCWNSMILGLANNGFEERAMDLFSELERSGLEP), 358–388 (DSVSFIGVLTACAHSGEVHRADEFFRLMKEK), and 394–424 (SIKHYTLMVNVLGGAGLLEEAEALIKNMPVE). Residues 429 to 504 (IWSSLLSACR…EVGCSSIEVD (76 aa)) are type E motif. The type E(+) motif stretch occupies residues 505–535 (FEVHEFISCGGTHPKSAEIYSLLDILNWDVS).

It belongs to the PPR family. PCMP-E subfamily.

It is found in the plastid. It localises to the chloroplast. In Arabidopsis thaliana (Mouse-ear cress), this protein is Pentatricopeptide repeat-containing protein At2g42920, chloroplastic (PCMP-E75).